The sequence spans 943 residues: MPGVEDPCDSQGTPPEEPSTSVAPGEAAKEQSPRLCGYLAKLSGKGPLRSFKNRWFVLDPRKCQFYYFKHHQDAQPLGQIDIGDASFSYDLEAEEGQFEIHSAGRVSILRAPSRHAMTYWLQELQQKRWEYCNSFGALKRESVINPASTKVPIGLVARESPDYMGIPNINDAERARNQFAVETCPSVLGDQTSAEQASNNPAAVQVLLRQWSNDIRSSMQHLRPGKSSDCRKSTFYTNEEWELLNPTPKELEESLLHVEKRKPPTEGIKGSTGMSFPFDFGRIPQRARRPLREIMGVNKNRTECLADSLPVSDSRMESDVLLKLQSQEEELERLKKDLLSQKELVRLLQQSLRSSQYDKYFASPFCDGLSKEHLHLLQQKDTQIQELNHLLERQTLEKDHLHQEVEELKCSVKELKDQLNMMMETIQAKDEVIMRLSRQLSKYEQHTPSSTVAAEIPVAPQLEELNRLQDSLQGYKAQNTFLNKEILELSALRRNAERREREMEARYSNLEAKMCQIESKYLVLLQEMKTPVCSDDQGTAREFVNQLLEDALKVENAEQPEHTFVKPHTVSKYDIHGFLIVPEDDEEEEKLVAKVRALDLKTLSLTENQEISNVVKWDNYFASTVNREMACSPELKALVRNGIPHEHRSRMWKWFTNLHIKKLKDEAAPGYFQSLLQNALEKQNPASKQIELDLMRTLPNNKHYTSPTSEGIQKLRNVLLAYSWRNPDIGYCQGINRLAAIALLYLDQEDAFWCLVTIVEAFMPRDYYTKTLLGSQVDQRVFKDLMNEKLPRLCAHFEQYKVDYTLITFNWFLVVFVDSVVSDILFRIWDSLLYEGSKVIFRFALGLFKYKEEEILKLQDSMSIFKYLRYFSRTILDARKLCNIAFVDMNPFPLRQIRNRRTYHLEKVRLELSELEAIRADFIRERETNPERRDLISDDEEDS.

A disordered region spans residues 1–29; it reads MPGVEDPCDSQGTPPEEPSTSVAPGEAAK. Polar residues predominate over residues 10 to 22; sequence SQGTPPEEPSTSV. Residues 32–129 enclose the PH domain; the sequence is SPRLCGYLAK…WLQELQQKRW (98 aa). Positions 315 to 514 form a coiled coil; it reads RMESDVLLKL…ARYSNLEAKM (200 aa). Residues 642-836 form the Rab-GAP TBC domain; it reads GIPHEHRSRM…RIWDSLLYEG (195 aa).

Its subcellular location is the early endosome. Functionally, GTPase-activating protein that plays a role in the early steps of endocytosis. The protein is TBC1 domain family member 2B (tbc1d2b) of Xenopus tropicalis (Western clawed frog).